The chain runs to 278 residues: Movement protein (278 aa).

Residues 256–278 (TLRQEGRDKGDNRRVGVGESPTN) are disordered. The segment covering 259-271 (QEGRDKGDNRRVG) has biased composition (basic and acidic residues).

It belongs to the tobamoviruses movement protein family.

This is Movement protein from Vitis vinifera (Grape).